The chain runs to 429 residues: D-amino acid dehydrogenase (429 aa).

An FAD-binding site is contributed by 3–17; the sequence is VLILGSGVIGTTTAW.

This sequence belongs to the DadA oxidoreductase family. FAD serves as cofactor.

It catalyses the reaction a D-alpha-amino acid + A + H2O = a 2-oxocarboxylate + AH2 + NH4(+). It functions in the pathway amino-acid degradation; D-alanine degradation; NH(3) and pyruvate from D-alanine: step 1/1. Oxidative deamination of D-amino acids. The sequence is that of D-amino acid dehydrogenase from Xanthomonas campestris pv. campestris (strain B100).